A 498-amino-acid chain; its full sequence is Trichoplein keratin filament-binding protein (498 aa).

A coiled-coil region spans residues 11–39 (CSQQRLNQQLARQREQEARLRQQWEQNSR). Glycyl lysine isopeptide (Lys-Gly) (interchain with G-Cter in ubiquitin) cross-links involve residues Lys50 and Lys57. Coiled coils occupy residues 66-136 (AYQR…LIAE), 163-353 (VNSW…LREE), and 380-479 (LTGR…EAET). Residues 73–498 (KEEKRRSLEA…PYGHPKIAWN (426 aa)) form an interaction with keratin proteins region. The disordered stretch occupies residues 167-189 (EMQKEEKKQQEATAEQENKRYEN). The segment covering 168 to 189 (MQKEEKKQQEATAEQENKRYEN) has biased composition (basic and acidic residues). The trichohyalin/plectin homology domain stretch occupies residues 259 to 425 (KQMEAFRQKA…RELARREKEE (167 aa)). Positions 447–498 (QAWEADQQEEEEEEEARRVEQLSDALLQQEAETMAEQGYRPKPYGHPKIAWN) are disordered.

The protein belongs to the TCHP family. In terms of assembly, interacts specifically with keratin proteins including, KRT5, KRT6A, KRT8, KRT14, KRT16 and KRT18. Interacts with KCTD17. Post-translationally, ubiquitinated. Ubiquitination by the BCR(KCTD17) E3 ubiquitin ligase complex results in proteasomal degradation, and induces ciliogenesis. As to expression, expressed at high levels in normal urothelial and breast epithelial cells. Also expressed in the smooth muscle and endothelial cells. Reduced expression seen in advanced bladder and breast carcinomas (at protein level). Ubiquitous. Expressed at highest levels in the heart, skeletal muscle, kidney, liver and testis.

Its subcellular location is the cytoplasm. The protein localises to the cytoskeleton. The protein resides in the cell membrane. It is found in the mitochondrion. It localises to the cell junction. Its subcellular location is the desmosome. The protein localises to the microtubule organizing center. The protein resides in the centrosome. Functionally, tumor suppressor which has the ability to inhibit cell growth and be pro-apoptotic during cell stress. Inhibits cell growth in bladder and prostate cancer cells by a down-regulation of HSPB1 by inhibiting its phosphorylation. May act as a 'capping' or 'branching' protein for keratin filaments in the cell periphery. May regulate K8/K18 filament and desmosome organization mainly at the apical or peripheral regions of simple epithelial cells. Is a negative regulator of ciliogenesis. The sequence is that of Trichoplein keratin filament-binding protein from Homo sapiens (Human).